We begin with the raw amino-acid sequence, 202 residues long: Recombination protein RecR (202 aa).

The C4-type zinc finger occupies 56–71 (CVVCGTVSDGELCRIC). The Toprim domain occupies 79-179 (TMICVVEEPK…TVTRLASGLP (101 aa)).

Belongs to the RecR family.

Its function is as follows. May play a role in DNA repair. It seems to be involved in an RecBC-independent recombinational process of DNA repair. It may act with RecF and RecO. The sequence is that of Recombination protein RecR from Nocardia farcinica (strain IFM 10152).